A 1225-amino-acid chain; its full sequence is MFARKPPGAAPLGAMPVPDQPSSASEKTSSLSPGLNTSNGDGSETETTSAILASVKEQELQFERLTRELEAERQIVASQLERCKLGSETGSMSSMSSAEEQFQWQSQDGQKDIEDELTTGLELVDSCIRSLQESGILDPQDYSTGERPSLLSQSALQLNSKPEGSFQYPASYHSNQTLALGETTPSQLPARGTQARATGQSFSQGTTSRAGHLAGPEPAPPPPPPPREPFAPSLGSAFHLPDAPPAAAAAALYYSSSTLPAPPRGGSPLAAPQGGSPTKLQRGGSAPEGATYAAPRGSSPKQSPSRLAKSYSTSSPINIVVSSAGLSPIRVTSPPTVQSTISSSPIHQLSSTIGTYATLSPTKRLVHASEQYSKHSQELYATATLQRPGSLAAGSRASYSSQHGHLGPELRALQSPEHHIDPIYEDRVYQKPPMRSLSQSQGDPLPPAHTGTYRTSTAPSSPGVDSVPLQRTGSQHGPQNAAAATFQRASYAAGPASNYADPYRQLQYCPSVESPYSKSGPALPPEGTLARSPSIDSIQKDPREFGWRDPELPEVIQMLQHQFPSVQSNAAAYLQHLCFGDNKIKAEIRRQGGIQLLVDLLDHRMTEVHRSACGALRNLVYGKANDDNKIALKNCGGIPALVRLLRKTTDLEIRELVTGVLWNLSSCDALKMPIIQDALAVLTNAVIIPHSGWENSPLQDDRKIQLHSSQVLRNATGCLRNVSSAGEEARRRMRECDGLTDALLYVIQSALGSSEIDSKTVENCVCILRNLSYRLAAETSQGQHMGTDELDGLLCGEANGKDAESSGCWGKKKKKKKSQDQWDGVGPLPDCAEPPKGIQMLWHPSIVKPYLTLLSECSNPDTLEGAAGALQNLAAGSWKWSVYIRAAVRKEKGLPILVELLRIDNDRVVCAVATALRNMALDVRNKELIGKYAMRDLVHRLPGGNNSNNTASKAMSDDTVTAVCCTLHEVITKNMENAKALRDAGGIEKLVGISKSKGDKHSPKVVKAASQVLNSMWQYRDLRSLYKKDGWSQYHFVASSSTIERDRQRPYSSSRTPSISPVRVSPNNRSASAPASPREMISLKERKTDYECTGSNATYHGAKGEHTSRKDAMTAQNTGISTLYRNSYGAPAEDIKHNQVSAQPVPQEPSRKDYETYQPFQNSTRNYDESFFEDQVHHRPPASEYTMHLGLKSTGNYVDFYSAARPYSELNYETSHYPASPDSWV.

Disordered regions lie at residues 1-51, 87-117, 134-242, and 256-312; these read MFAR…TSAI, SETG…EDEL, SGIL…HLPD, and SSTL…KSYS. 2 stretches are compositionally biased toward polar residues: residues 20-51 and 98-108; these read QPSS…TSAI and AEEQFQWQSQD. Positions 49-84 form a coiled coil; it reads SAILASVKEQELQFERLTRELEAERQIVASQLERCK. A compositionally biased stretch (low complexity) spans 149-160; the sequence is SLLSQSALQLNS. 2 stretches are compositionally biased toward polar residues: residues 172–187 and 195–209; these read YHSN…TPSQ and ARAT…TTSR. The residue at position 209 (Arg209) is an Omega-N-methylarginine. Positions 217–229 are enriched in pro residues; the sequence is EPAPPPPPPPREP. Residue Arg264 is modified to Omega-N-methylarginine. 2 positions are modified to phosphoserine: Ser267 and Ser276. 2 positions are modified to omega-N-methylarginine: Arg282 and Arg296. Over residues 299-312 the composition is skewed to polar residues; that stretch reads SPKQSPSRLAKSYS. Ser327, Ser360, Ser415, and Ser461 each carry phosphoserine. The ARM 1 repeat unit spans residues 394–438; the sequence is GSRASYSSQHGHLGPELRALQSPEHHIDPIYEDRVYQKPPMRSLS. Disordered stretches follow at residues 432–483 and 514–542; these read PPMR…NAAA and SPYS…QKDP. Polar residues predominate over residues 469 to 478; sequence LQRTGSQHGP. Ser514 bears the Phosphoserine mark. Tyr516 carries the post-translational modification Phosphotyrosine. ARM repeat units follow at residues 540-579, 582-621, 626-666, 682-724, 728-773, 835-875, 882-921, and 975-1018; these read KDPR…HLCF, NKIK…NLVY, DDNK…NLSS, LTNA…NVSS, EARR…NLSY, PKGI…NLAA, VYIR…NMAL, and MENA…SMWQ. A disordered region spans residues 1042–1077; the sequence is TIERDRQRPYSSSRTPSISPVRVSPNNRSASAPASP. The segment covering 1050–1059 has biased composition (polar residues); sequence PYSSSRTPSI. Phosphoserine occurs at positions 1065 and 1076. Positions 1065 to 1077 are enriched in low complexity; sequence SPNNRSASAPASP.

It belongs to the beta-catenin family. In terms of assembly, binds to E-cadherin at a juxtamembrane site within the cytoplasmic domain. Interacts with PDZD2. Interacts with ZBTB33. Binds to PSEN1. Interacts with ARHGEF28. Interacts (via the extreme C-terminus) with FRMPD2 (via the PDZ 2 domain). Interacts with CDK5. Interacts with CTNNB1. Interacts with GSK3A and GSK3B. Interacts with DNM2. Interacts with CCDC85B. O-glycosylated. In terms of processing, phosphorylated by CDK5. Phosphorylated by GSK3B. As to expression, expressed in brain; highest expression is observed in fetal brain.

Its subcellular location is the nucleus. The protein resides in the cell junction. It localises to the adherens junction. The protein localises to the cell projection. It is found in the dendrite. Its subcellular location is the perikaryon. Functionally, has a critical role in neuronal development, particularly in the formation and/or maintenance of dendritic spines and synapses. Involved in the regulation of Wnt signaling. It probably acts on beta-catenin turnover, facilitating beta-catenin interaction with GSK3B, phosphorylation, ubiquitination and degradation. Functions as a transcriptional activator when bound to ZBTB33. May be involved in neuronal cell adhesion and tissue morphogenesis and integrity by regulating adhesion molecules. This Homo sapiens (Human) protein is Catenin delta-2 (CTNND2).